A 638-amino-acid polypeptide reads, in one-letter code: tRNA uridine 5-carboxymethylaminomethyl modification enzyme MnmG (638 aa).

Residues 15–20 (GAGHAG), Ile127, and Ser182 each bind FAD. 276 to 290 (GPRYCPSIEDKIVRF) serves as a coordination point for NAD(+). Gln373 is a binding site for FAD.

The protein belongs to the MnmG family. Homodimer. Heterotetramer of two MnmE and two MnmG subunits. The cofactor is FAD.

The protein resides in the cytoplasm. In terms of biological role, NAD-binding protein involved in the addition of a carboxymethylaminomethyl (cmnm) group at the wobble position (U34) of certain tRNAs, forming tRNA-cmnm(5)s(2)U34. This is tRNA uridine 5-carboxymethylaminomethyl modification enzyme MnmG from Streptococcus suis (strain 98HAH33).